Reading from the N-terminus, the 240-residue chain is Putative truncated effector protein hopW1-2 (240 aa).

A disordered region spans residues methionine 1–proline 32. The segment covering threonine 9–serine 23 has biased composition (low complexity).

This sequence belongs to the HopW family.

This Pseudomonas syringae pv. maculicola protein is Putative truncated effector protein hopW1-2 (hopW1-2).